Reading from the N-terminus, the 163-residue chain is UPF0763 protein JJD26997_0796 (163 aa).

This sequence belongs to the UPF0763 family.

This chain is UPF0763 protein JJD26997_0796, found in Campylobacter jejuni subsp. doylei (strain ATCC BAA-1458 / RM4099 / 269.97).